Reading from the N-terminus, the 424-residue chain is Exodeoxyribonuclease 7 large subunit (424 aa).

This sequence belongs to the XseA family. In terms of assembly, heterooligomer composed of large and small subunits.

Its subcellular location is the cytoplasm. It carries out the reaction Exonucleolytic cleavage in either 5'- to 3'- or 3'- to 5'-direction to yield nucleoside 5'-phosphates.. Its function is as follows. Bidirectionally degrades single-stranded DNA into large acid-insoluble oligonucleotides, which are then degraded further into small acid-soluble oligonucleotides. This chain is Exodeoxyribonuclease 7 large subunit, found in Cyanothece sp. (strain PCC 7425 / ATCC 29141).